The sequence spans 175 residues: Ribosome maturation factor RimM (175 aa).

Positions 100 to 173 constitute a PRC barrel domain; sequence EGEYYFHEII…IIIIRPMEGL (74 aa).

This sequence belongs to the RimM family. As to quaternary structure, binds ribosomal protein uS19.

It is found in the cytoplasm. Its function is as follows. An accessory protein needed during the final step in the assembly of 30S ribosomal subunit, possibly for assembly of the head region. Essential for efficient processing of 16S rRNA. May be needed both before and after RbfA during the maturation of 16S rRNA. It has affinity for free ribosomal 30S subunits but not for 70S ribosomes. The chain is Ribosome maturation factor RimM from Geobacillus thermodenitrificans (strain NG80-2).